The sequence spans 234 residues: Leucyl/phenylalanyl-tRNA--protein transferase (234 aa).

Belongs to the L/F-transferase family.

The protein localises to the cytoplasm. The catalysed reaction is N-terminal L-lysyl-[protein] + L-leucyl-tRNA(Leu) = N-terminal L-leucyl-L-lysyl-[protein] + tRNA(Leu) + H(+). It carries out the reaction N-terminal L-arginyl-[protein] + L-leucyl-tRNA(Leu) = N-terminal L-leucyl-L-arginyl-[protein] + tRNA(Leu) + H(+). It catalyses the reaction L-phenylalanyl-tRNA(Phe) + an N-terminal L-alpha-aminoacyl-[protein] = an N-terminal L-phenylalanyl-L-alpha-aminoacyl-[protein] + tRNA(Phe). Functionally, functions in the N-end rule pathway of protein degradation where it conjugates Leu, Phe and, less efficiently, Met from aminoacyl-tRNAs to the N-termini of proteins containing an N-terminal arginine or lysine. The chain is Leucyl/phenylalanyl-tRNA--protein transferase from Escherichia coli O81 (strain ED1a).